Consider the following 65-residue polypeptide: Ferredoxin-1 (65 aa).

Residues 2-30 (AMKIDPELCTSCGDCEPVCPTNAIAPKKG) enclose the 4Fe-4S ferredoxin-type domain. Residues cysteine 10, cysteine 13, cysteine 16, cysteine 20, cysteine 39, cysteine 42, cysteine 51, and cysteine 55 each coordinate [4Fe-4S] cluster.

The cofactor is [4Fe-4S] cluster.

Ferredoxins are iron-sulfur proteins that transfer electrons in a wide variety of metabolic reactions. This ferredoxin probably participates in nitrogen fixation. The polypeptide is Ferredoxin-1 (fdxN) (Rhodobacter capsulatus (Rhodopseudomonas capsulata)).